We begin with the raw amino-acid sequence, 169 residues long: Crossover junction endodeoxyribonuclease RuvC (169 aa).

Active-site residues include Asp-11, Glu-71, and His-143. 3 residues coordinate Mg(2+): Asp-11, Glu-71, and His-143.

Belongs to the RuvC family. As to quaternary structure, homodimer which binds Holliday junction (HJ) DNA. The HJ becomes 2-fold symmetrical on binding to RuvC with unstacked arms; it has a different conformation from HJ DNA in complex with RuvA. In the full resolvosome a probable DNA-RuvA(4)-RuvB(12)-RuvC(2) complex forms which resolves the HJ. Mg(2+) is required as a cofactor.

Its subcellular location is the cytoplasm. The enzyme catalyses Endonucleolytic cleavage at a junction such as a reciprocal single-stranded crossover between two homologous DNA duplexes (Holliday junction).. The RuvA-RuvB-RuvC complex processes Holliday junction (HJ) DNA during genetic recombination and DNA repair. Endonuclease that resolves HJ intermediates. Cleaves cruciform DNA by making single-stranded nicks across the HJ at symmetrical positions within the homologous arms, yielding a 5'-phosphate and a 3'-hydroxyl group; requires a central core of homology in the junction. The consensus cleavage sequence is 5'-(A/T)TT(C/G)-3'. Cleavage occurs on the 3'-side of the TT dinucleotide at the point of strand exchange. HJ branch migration catalyzed by RuvA-RuvB allows RuvC to scan DNA until it finds its consensus sequence, where it cleaves and resolves the cruciform DNA. The sequence is that of Crossover junction endodeoxyribonuclease RuvC from Mesorhizobium japonicum (strain LMG 29417 / CECT 9101 / MAFF 303099) (Mesorhizobium loti (strain MAFF 303099)).